The following is a 306-amino-acid chain: Porphobilinogen deaminase (306 aa).

An S-(dipyrrolylmethanemethyl)cysteine modification is found at C241.

This sequence belongs to the HMBS family. In terms of assembly, monomer. It depends on dipyrromethane as a cofactor.

The enzyme catalyses 4 porphobilinogen + H2O = hydroxymethylbilane + 4 NH4(+). It functions in the pathway porphyrin-containing compound metabolism; protoporphyrin-IX biosynthesis; coproporphyrinogen-III from 5-aminolevulinate: step 2/4. In terms of biological role, tetrapolymerization of the monopyrrole PBG into the hydroxymethylbilane pre-uroporphyrinogen in several discrete steps. The protein is Porphobilinogen deaminase of Acidithiobacillus ferrooxidans (strain ATCC 23270 / DSM 14882 / CIP 104768 / NCIMB 8455) (Ferrobacillus ferrooxidans (strain ATCC 23270)).